A 113-amino-acid chain; its full sequence is Sensorin-A (113 aa).

The N-terminal stretch at 1 to 32 (MPSRAATSPLNVQMMVVLCIVCLALQAVAANA) is a signal peptide. Position 54 is a phenylalanine amide (F54). Residues 58 to 113 (SSSETYSTNLINLLSRQLVSQEELRAILEKQPILLDEVVKILDRNDDGYITVADLL) constitute a propeptide that is removed on maturation. Residues 87 to 113 (KQPILLDEVVKILDRNDDGYITVADLL) enclose the EF-hand domain. Positions 100, 102, 104, 106, and 111 each coordinate Ca(2+).

As to expression, seems to be specific to the mechanosensory neurons of the central nervous system.

Its subcellular location is the secreted. Functionally, may function as an inhibitory cotransmitter acting in conjunction with the fast excitatory transmitter released by sensory neurons. The peptide selectively inhibits certain postsynaptic cells probably by means of sensorin A release. This chain is Sensorin-A (PSC1), found in Aplysia californica (California sea hare).